Reading from the N-terminus, the 332-residue chain is Ribosomal RNA small subunit methyltransferase H (332 aa).

Residues 34–36 (GGH), D59, F86, D112, and Q119 contribute to the S-adenosyl-L-methionine site.

Belongs to the methyltransferase superfamily. RsmH family.

It localises to the cytoplasm. It carries out the reaction cytidine(1402) in 16S rRNA + S-adenosyl-L-methionine = N(4)-methylcytidine(1402) in 16S rRNA + S-adenosyl-L-homocysteine + H(+). Specifically methylates the N4 position of cytidine in position 1402 (C1402) of 16S rRNA. The sequence is that of Ribosomal RNA small subunit methyltransferase H from Chlorobium phaeobacteroides (strain BS1).